We begin with the raw amino-acid sequence, 329 residues long: Biotin synthase (329 aa).

The region spanning 46–275 is the Radical SAM core domain; sequence YYGNKVKLNM…TKEIRISGGR (230 aa). [4Fe-4S] cluster-binding residues include Cys64, Cys68, and Cys71. [2Fe-2S] cluster contacts are provided by Cys108, Cys140, Cys200, and Arg270.

Belongs to the radical SAM superfamily. Biotin synthase family. In terms of assembly, homodimer. [4Fe-4S] cluster serves as cofactor. Requires [2Fe-2S] cluster as cofactor.

It carries out the reaction (4R,5S)-dethiobiotin + (sulfur carrier)-SH + 2 reduced [2Fe-2S]-[ferredoxin] + 2 S-adenosyl-L-methionine = (sulfur carrier)-H + biotin + 2 5'-deoxyadenosine + 2 L-methionine + 2 oxidized [2Fe-2S]-[ferredoxin]. It participates in cofactor biosynthesis; biotin biosynthesis; biotin from 7,8-diaminononanoate: step 2/2. Catalyzes the conversion of dethiobiotin (DTB) to biotin by the insertion of a sulfur atom into dethiobiotin via a radical-based mechanism. The chain is Biotin synthase from Anoxybacillus flavithermus (strain DSM 21510 / WK1).